The following is a 321-amino-acid chain: Glucokinase (321 aa).

8–13 is an ATP binding site; that stretch reads GDVGGT.

This sequence belongs to the bacterial glucokinase family.

It is found in the cytoplasm. The catalysed reaction is D-glucose + ATP = D-glucose 6-phosphate + ADP + H(+). The protein is Glucokinase of Cronobacter sakazakii (strain ATCC BAA-894) (Enterobacter sakazakii).